We begin with the raw amino-acid sequence, 170 residues long: Adenine phosphoribosyltransferase (170 aa).

This sequence belongs to the purine/pyrimidine phosphoribosyltransferase family. Homodimer.

It localises to the cytoplasm. It carries out the reaction AMP + diphosphate = 5-phospho-alpha-D-ribose 1-diphosphate + adenine. Its pathway is purine metabolism; AMP biosynthesis via salvage pathway; AMP from adenine: step 1/1. Functionally, catalyzes a salvage reaction resulting in the formation of AMP, that is energically less costly than de novo synthesis. This is Adenine phosphoribosyltransferase from Carboxydothermus hydrogenoformans (strain ATCC BAA-161 / DSM 6008 / Z-2901).